We begin with the raw amino-acid sequence, 187 residues long: Putative lipoprotein LppJ (187 aa).

Residues 1 to 28 form the signal peptide; the sequence is MPHSTADRRLRLTRQALLAAAVVPLLAG. A lipid anchor (N-palmitoyl cysteine) is attached at cysteine 29. Cysteine 29 is lipidated: S-diacylglycerol cysteine.

Its subcellular location is the cell membrane. This is Putative lipoprotein LppJ (lppJ) from Mycobacterium tuberculosis (strain CDC 1551 / Oshkosh).